The primary structure comprises 627 residues: Protein fem-1 homolog B (627 aa).

ANK repeat units follow at residues 45-74, 87-116, 120-149, and 153-182; these read QRST…VQTQ, DGAT…NVNH, TNST…NISI, and YDNT…DPNA. The Zn(2+) site is built by H185, C186, and H218. 2 ANK repeats span residues 186–215 and 218–248; these read CGAT…AIVV and HGMT…DRRS. The stretch at 344 to 377 is one TPR repeat; that stretch reads SHPIIYRGAVYADNMEFEQCIKLWLHALHLRQKG. ANK repeat units lie at residues 483-527 and 531-568; these read EGFT…EVNA and EGNS…HTDM.

The protein belongs to the fem-1 family. Component of a CRL2 E3 ubiquitin-protein ligase complex, also named ECS (Elongin BC-CUL2/5-SOCS-box protein) complex, composed of CUL2, Elongin BC (ELOB and ELOC), RBX1 and substrate-specific adapter FEM1B. Homooligomer. Interacts with PPM1F and PHTF1. Interacts with the death domain of FAS/TNFRSF6 and TNFRSF1A. Interacts with CHEK1. Interacts with NKX3-1. As to expression, present in adult testis (at protein level).

It localises to the cytoplasm. Its subcellular location is the nucleus. Its pathway is protein modification; protein ubiquitination. Its activity is regulated as follows. Activity of the CRL2(FEM1B) complex toward FNIP1 is inhibited by BEX family proteins (BEX1, BEX2, BEX3 and/or BEX4) in absence of reductive stress. Mechanistically, BEX proteins act as pseudosubstrate inhibitors that associate with FEM1B via zinc in absence of reductive stress, thereby preventing association between FEM1B and FNIP1. In terms of biological role, substrate-recognition component of a Cul2-RING (CRL2) E3 ubiquitin-protein ligase complex of the DesCEND (destruction via C-end degrons) pathway, which recognizes a C-degron located at the extreme C terminus of target proteins, leading to their ubiquitination and degradation. The C-degron recognized by the DesCEND pathway is usually a motif of less than ten residues and can be present in full-length proteins, truncated proteins or proteolytically cleaved forms. The CRL2(FEM1B) complex specifically recognizes proteins ending with -Gly-Leu-Asp-Arg, such as CDK5R1, leading to their ubiquitination and degradation. Also acts as a regulator of the reductive stress response by mediating ubiquitination of reduced FNIP1: in response to reductive stress, the CRL2(FEM1B) complex specifically recognizes a conserved Cys degron in FNIP1 when this degron is reduced, leading to FNIP1 degradation and subsequent activation of mitochondria to recalibrate reactive oxygen species (ROS). Mechanistically, recognizes and binds reduced FNIP1 through two interface zinc ions, which act as a molecular glue that recruit reduced FNIP1 to FEM1B. Promotes ubiquitination of GLI1, suppressing GLI1 transcriptional activator activity. Promotes ubiquitination and degradation of ANKRD37. Promotes ubiquitination and degradation of SLBP. Involved in apoptosis by acting as a death receptor-associated protein that mediates apoptosis. Also involved in glucose homeostasis in pancreatic islet. May also act as an adapter/mediator in replication stress-induced signaling that leads to the activation of CHEK1. This is Protein fem-1 homolog B from Rattus norvegicus (Rat).